Consider the following 246-residue polypeptide: Sugar fermentation stimulation protein homolog (246 aa).

This sequence belongs to the SfsA family.

The protein is Sugar fermentation stimulation protein homolog of Prochlorococcus marinus (strain MIT 9301).